The chain runs to 180 residues: tRNA (cytidine(56)-2'-O)-methyltransferase (180 aa).

Residues leucine 84 and 112-116 contribute to the S-adenosyl-L-methionine site; that span reads GAEKV.

Belongs to the aTrm56 family. In terms of assembly, homodimer.

Its subcellular location is the cytoplasm. It carries out the reaction cytidine(56) in tRNA + S-adenosyl-L-methionine = 2'-O-methylcytidine(56) in tRNA + S-adenosyl-L-homocysteine + H(+). Functionally, specifically catalyzes the AdoMet-dependent 2'-O-ribose methylation of cytidine at position 56 in tRNAs. The polypeptide is tRNA (cytidine(56)-2'-O)-methyltransferase (Natronomonas pharaonis (strain ATCC 35678 / DSM 2160 / CIP 103997 / JCM 8858 / NBRC 14720 / NCIMB 2260 / Gabara) (Halobacterium pharaonis)).